Consider the following 536-residue polypeptide: Butyrophilin-like protein 9 (536 aa).

The N-terminal stretch at 1–35 (MADFSVFLGFLKQIPRCLSIFFTYLLFLQLWEVNS) is a signal peptide. Ig-like V-type domains are found at residues 36–149 (DKVW…WELE) and 152–241 (GSGS…KEFV). At 36 to 257 (DKVWVLGPEE…FLPRMSPWKK (222 aa)) the chain is on the extracellular side. Cys59 and Cys133 are disulfide-bonded. 3 N-linked (GlcNAc...) asparagine glycosylation sites follow: Asn102, Asn139, and Asn224. Residues Cys173 and Cys227 are joined by a disulfide bond. A helical transmembrane segment spans residues 258 to 278 (AFVGTLVVLPLSLIVLTMLAL). Topologically, residues 279-536 (RYFYKLRSFQ…PAWAVNEAVS (258 aa)) are cytoplasmic. In terms of domain architecture, B30.2/SPRY spans 307 to 506 (DWRRSEGQAE…MTICSLPVRG (200 aa)).

The protein belongs to the immunoglobulin superfamily. BTN/MOG family.

Its subcellular location is the membrane. The polypeptide is Butyrophilin-like protein 9 (Btnl9) (Mus musculus (Mouse)).